A 532-amino-acid polypeptide reads, in one-letter code: Pyruvate kinase (532 aa).

Arginine 63 serves as a coordination point for substrate. Residues asparagine 65, serine 67, aspartate 99, and threonine 100 each coordinate K(+). Position 65 to 68 (65 to 68 (NFSH)) interacts with ATP. ATP-binding residues include arginine 106 and lysine 191. Glutamate 256 contributes to the Mg(2+) binding site. Substrate contacts are provided by glycine 279, aspartate 280, and threonine 312. Aspartate 280 contacts Mg(2+).

It belongs to the pyruvate kinase family. Homotetramer. Requires Mg(2+) as cofactor. K(+) is required as a cofactor.

It catalyses the reaction pyruvate + ATP = phosphoenolpyruvate + ADP + H(+). It participates in carbohydrate degradation; glycolysis; pyruvate from D-glyceraldehyde 3-phosphate: step 5/5. The protein is Pyruvate kinase (pkiA) of Agaricus bisporus (White button mushroom).